We begin with the raw amino-acid sequence, 105 residues long: Large ribosomal subunit protein uL24 (105 aa).

It belongs to the universal ribosomal protein uL24 family. In terms of assembly, part of the 50S ribosomal subunit.

In terms of biological role, one of two assembly initiator proteins, it binds directly to the 5'-end of the 23S rRNA, where it nucleates assembly of the 50S subunit. Functionally, one of the proteins that surrounds the polypeptide exit tunnel on the outside of the subunit. The sequence is that of Large ribosomal subunit protein uL24 from Rhodospirillum centenum (strain ATCC 51521 / SW).